Consider the following 118-residue polypeptide: Small ribosomal subunit protein mS37 (118 aa).

The CHCH domain occupies 42–84 (EATCITEMSMMMACWKQNEFRDEACRKEIQDFFDCSSRAQEAR). 2 short sequence motifs (cx9C motif) span residues 45 to 55 (CITEMSMMMAC) and 66 to 76 (CRKEIQDFFDC). Intrachain disulfides connect Cys-45–Cys-76 and Cys-55–Cys-66. Residues 86 to 105 (MRSIQESLGQSESLSPHKMT) form a disordered region. Residues 89–99 (IQESLGQSESL) are compositionally biased toward polar residues.

It belongs to the mitochondrion-specific ribosomal protein mS37 family. As to quaternary structure, component of the mitochondrial ribosome small subunit (28S) which comprises a 12S rRNA and about 30 distinct proteins.

The protein localises to the mitochondrion. The protein resides in the nucleus. In Mus musculus (Mouse), this protein is Small ribosomal subunit protein mS37 (Chchd1).